Here is a 154-residue protein sequence, read N- to C-terminus: NADPH-dependent 7-cyano-7-deazaguanine reductase (154 aa).

Residues Met1–Glu23 show a composition bias toward polar residues. Residues Met1–Val26 are disordered. Cys52 acts as the Thioimide intermediate in catalysis. The active-site Proton donor is Asp59. Residues Val74–Ser76 and His93–Glu94 contribute to the substrate site.

This sequence belongs to the GTP cyclohydrolase I family. QueF type 1 subfamily.

The protein localises to the cytoplasm. It catalyses the reaction 7-aminomethyl-7-carbaguanine + 2 NADP(+) = 7-cyano-7-deazaguanine + 2 NADPH + 3 H(+). The protein operates within tRNA modification; tRNA-queuosine biosynthesis. Functionally, catalyzes the NADPH-dependent reduction of 7-cyano-7-deazaguanine (preQ0) to 7-aminomethyl-7-deazaguanine (preQ1). This Rhizobium leguminosarum bv. trifolii (strain WSM2304) protein is NADPH-dependent 7-cyano-7-deazaguanine reductase.